Consider the following 430-residue polypeptide: Asparagine--tRNA ligase (430 aa).

This sequence belongs to the class-II aminoacyl-tRNA synthetase family. As to quaternary structure, homodimer.

Its subcellular location is the cytoplasm. It carries out the reaction tRNA(Asn) + L-asparagine + ATP = L-asparaginyl-tRNA(Asn) + AMP + diphosphate + H(+). The sequence is that of Asparagine--tRNA ligase from Staphylococcus aureus (strain MSSA476).